We begin with the raw amino-acid sequence, 175 residues long: Ribosome maturation factor RimM (175 aa).

The 80-residue stretch at 96-175 (DGDYYWKDLI…IIKVDWDPEF (80 aa)) folds into the PRC barrel domain.

It belongs to the RimM family. In terms of assembly, binds ribosomal protein uS19.

Its subcellular location is the cytoplasm. An accessory protein needed during the final step in the assembly of 30S ribosomal subunit, possibly for assembly of the head region. Essential for efficient processing of 16S rRNA. May be needed both before and after RbfA during the maturation of 16S rRNA. It has affinity for free ribosomal 30S subunits but not for 70S ribosomes. This chain is Ribosome maturation factor RimM, found in Baumannia cicadellinicola subsp. Homalodisca coagulata.